Here is a 320-residue protein sequence, read N- to C-terminus: Lipoyl synthase (320 aa).

Residues Cys-66, Cys-71, Cys-77, Cys-92, Cys-96, Cys-99, and Ser-306 each coordinate [4Fe-4S] cluster. In terms of domain architecture, Radical SAM core spans 77–295 (CFGHGTATFM…AEIGYAMGFS (219 aa)).

The protein belongs to the radical SAM superfamily. Lipoyl synthase family. The cofactor is [4Fe-4S] cluster.

The protein resides in the cytoplasm. The enzyme catalyses [[Fe-S] cluster scaffold protein carrying a second [4Fe-4S](2+) cluster] + N(6)-octanoyl-L-lysyl-[protein] + 2 oxidized [2Fe-2S]-[ferredoxin] + 2 S-adenosyl-L-methionine + 4 H(+) = [[Fe-S] cluster scaffold protein] + N(6)-[(R)-dihydrolipoyl]-L-lysyl-[protein] + 4 Fe(3+) + 2 hydrogen sulfide + 2 5'-deoxyadenosine + 2 L-methionine + 2 reduced [2Fe-2S]-[ferredoxin]. It participates in protein modification; protein lipoylation via endogenous pathway; protein N(6)-(lipoyl)lysine from octanoyl-[acyl-carrier-protein]: step 2/2. Catalyzes the radical-mediated insertion of two sulfur atoms into the C-6 and C-8 positions of the octanoyl moiety bound to the lipoyl domains of lipoate-dependent enzymes, thereby converting the octanoylated domains into lipoylated derivatives. The protein is Lipoyl synthase of Thioalkalivibrio sulfidiphilus (strain HL-EbGR7).